An 846-amino-acid polypeptide reads, in one-letter code: Major vault protein beta (846 aa).

N-acetylalanine is present on Ala-2. 9 MVP repeats span residues 2-60 (ATPV…IPPR), 61-115 (QYCI…QPVP), 116-172 (LQVI…EPVR), 173-225 (AVII…GFIQ), 226-280 (ALVL…RDIK), 281-332 (AITL…IQNV), 333-388 (NVLS…RRKR), 389-458 (IPLD…STKV), and 459-521 (ITYR…FLGP).

In terms of assembly, the vault ribonucleoprotein particle is a huge (400 A x 670 A) cage structure of 12.9 MDa. It consists of a dimer of half-vaults, with each half-vault comprising 39 identical major vault protein (MVP) chains. Dictyostelium is one of the few organisms in which the major component is actually two proteins (alpha and beta).

It is found in the cytoplasm. Its subcellular location is the nucleus. Unknown, though MVP-beta is required for normal vault structure. This chain is Major vault protein beta (mvpB), found in Dictyostelium discoideum (Social amoeba).